The primary structure comprises 699 residues: Elongation factor G (699 aa).

The 276-residue stretch at 8-283 (EHIRNIGICA…AVVYFLPSPI (276 aa)) folds into the tr-type G domain. GTP-binding positions include 17–24 (AHIDAGKT), 81–85 (DTPGH), and 135–138 (NKMD).

This sequence belongs to the TRAFAC class translation factor GTPase superfamily. Classic translation factor GTPase family. EF-G/EF-2 subfamily.

Its subcellular location is the cytoplasm. Functionally, catalyzes the GTP-dependent ribosomal translocation step during translation elongation. During this step, the ribosome changes from the pre-translocational (PRE) to the post-translocational (POST) state as the newly formed A-site-bound peptidyl-tRNA and P-site-bound deacylated tRNA move to the P and E sites, respectively. Catalyzes the coordinated movement of the two tRNA molecules, the mRNA and conformational changes in the ribosome. This Rickettsia akari (strain Hartford) protein is Elongation factor G.